Consider the following 288-residue polypeptide: CBY1-interacting BAR domain-containing protein 1 (288 aa).

The N-terminal 47 residues, 1–47 (MLRRSLENRDAQTRQLQDAVTNVEKHFGELCQIFAAYVRKTARLRDK), are a transit peptide targeting the mitochondrion. The interval 10–220 (DAQTRQLQDA…KIDEEEDLEV (211 aa)) is BAR-like. Residues 107 to 176 (KMKRDDLKAT…ETIDNFEKQK (70 aa)) adopt a coiled-coil conformation. Positions 266–288 (RKDHQTEDDDEEDEDLDVTEEEN) are disordered. The span at 271–288 (TEDDDEEDEDLDVTEEEN) shows a compositional bias: acidic residues.

This sequence belongs to the CIBAR family. As to quaternary structure, homodimer (via BAR-like domain). Heterodimer with FAM92B (via BAR-like domains). Interacts (via BAR-like domain) with CBY1; this interaction is required for targeting FAM92A to centriole and cilium basal body. Interacts (via BAR-like domain) with CBY3; both proteins form a ninefold symmetric structure at the flagellar base; are recruited to the annulus in a mutually dependent manner and regulate annulus positionning.

Its subcellular location is the cytoplasm. The protein localises to the cytoskeleton. The protein resides in the microtubule organizing center. It is found in the centrosome. It localises to the centriole. Its subcellular location is the cilium basal body. The protein localises to the cell projection. The protein resides in the cilium. It is found in the nucleus. It localises to the mitochondrion inner membrane. Its subcellular location is the flagellum. Functionally, plays a critical role in regulating mitochondrial ultrastructure and function by maintaining the integrity of mitochondrial morphology, particularly the organization of cristae. Preferentially binds to negatively charged phospholipids like cardiolipin and phosphatidylinositol 4,5-bisphosphate enhancing its interaction with mitochondrial membranes. Induces membrane curvature and tubulation, which are critical for maintaining mitochondrial ultrastructure and the organization of cristae. Plays a crucial role in ciliogenesis. May play a role in limb development through its role in ciliogenesis. Plays a key role in the correct positioning of the annulus, a septin-based ring structure in the sperm flagellum, serving both as a physical barrier and a membrane diffusion barrier that separates the midpiece (MP) from the principal piece (PP). This positioning is essential for proper sperm motility and function. Interacts with CBY3 to form a complex which localizes to the curved membrane region of the flagellar pocket. By doing so, may provide stability and rigidity to the periannular membrane to prevent membrane deformation. This function is crucial for halting annulus migration at the proximal end of the fibrous sheath-containing PP. The sequence is that of CBY1-interacting BAR domain-containing protein 1 from Bos taurus (Bovine).